The primary structure comprises 588 residues: Sulfite reductase [NADPH] hemoprotein beta-component (588 aa).

Positions 442, 448, 487, and 491 each coordinate [4Fe-4S] cluster. Residue Cys-491 participates in siroheme binding.

The protein belongs to the nitrite and sulfite reductase 4Fe-4S domain family. In terms of assembly, alpha(8)-beta(8). The alpha component is a flavoprotein, the beta component is a hemoprotein. Siroheme serves as cofactor. Requires [4Fe-4S] cluster as cofactor.

The enzyme catalyses hydrogen sulfide + 3 NADP(+) + 3 H2O = sulfite + 3 NADPH + 4 H(+). The protein operates within sulfur metabolism; hydrogen sulfide biosynthesis; hydrogen sulfide from sulfite (NADPH route): step 1/1. In terms of biological role, component of the sulfite reductase complex that catalyzes the 6-electron reduction of sulfite to sulfide. This is one of several activities required for the biosynthesis of L-cysteine from sulfate. In Actinobacillus pleuropneumoniae serotype 5b (strain L20), this protein is Sulfite reductase [NADPH] hemoprotein beta-component.